Consider the following 4011-residue polypeptide: Hybrid PKS-NRPS synthetase mycA (4011 aa).

A Ketosynthase family 3 (KS3) domain is found at 12-451 (NEPIAIIGSA…GANAHVILEN (440 aa)). Catalysis depends on for beta-ketoacyl synthase activity residues Cys185, His324, and His373. Positions 576 to 903 (VFTGQGAQWA…PYTGTLSRGS (328 aa)) are acyl transferase (AT) domain. An N-terminal hotdog fold region spans residues 977–1113 (NPLLGRRIPD…GRVIVTLAGT (137 aa)). Positions 977 to 1290 (NPLLGRRIPD…ITPLATRTGQ (314 aa)) constitute a PKS/mFAS DH domain. Positions 978–1287 (PLLGRRIPDG…GVRITPLATR (310 aa)) are dehydratase (DH) domain. His1009 acts as the Proton acceptor; for dehydratase activity in catalysis. The tract at residues 1135-1290 (TAEVREDEFY…ITPLATRTGQ (156 aa)) is C-terminal hotdog fold. The active-site Proton donor; for dehydratase activity is the Asp1195. Residues 1434-1626 (YYVEALGIRE…FSGIDTITPE (193 aa)) form a methyltransferase (MT) domain region. The segment at 2138 to 2311 (TYVLFGLTSD…AASVLHLGAV (174 aa)) is ketoreductase (KR)domain. The 76-residue stretch at 2429–2504 (DSFLQKLQIM…DLVAFAHEKL (76 aa)) folds into the Carrier 1 domain. An O-(pantetheine 4'-phosphoryl)serine modification is found at Ser2464. The disordered stretch occupies residues 2519–2607 (AAAAAAAERS…PREQDVERTA (89 aa)). Positions 2559 to 2578 (PASSSTGSDHPTSVTSSGHT) are enriched in polar residues. Positions 2604 to 2975 (ERTAPMSLGQ…KPDSTLGSAP (372 aa)) are condensation. Residues 3009-3414 (IIQRNPDTIA…GELEILGRID (406 aa)) are adenylation. A disordered region spans residues 3525-3544 (AKEEEEEKRPNGSSAAPLTQ). Residues 3535–3544 (NGSSAAPLTQ) show a composition bias toward polar residues. Positions 3541 to 3621 (PLTQQELQLR…AMAAAVHDAA (81 aa)) constitute a Carrier 2 domain. An O-(pantetheine 4'-phosphoryl)serine modification is found at Ser3581. Residues 3671-3978 (VVILTGATGF…RTVPLGQWIE (308 aa)) are reductase-like.

In the C-terminal section; belongs to the NRP synthetase family.

The enzyme catalyses L-leucine + 8 malonyl-CoA + 4 S-adenosyl-L-methionine + ATP + 9 NADPH + 12 H(+) = (5S)-5-(2-methylpropyl)-3-[(2E,6R,8E,10E,12E)-6,8,10,12-tetramethyltetradeca-2,8,10,12-tetraenoyl]-2,5-dihydro-1H-pyrrol-2-one + AMP + 4 S-adenosyl-L-homocysteine + 8 CO2 + diphosphate + 9 NADP(+) + 8 CoA + 7 H2O. The protein operates within mycotoxin biosynthesis. Functionally, hybrid PKS-NRPS synthetase; part of the gene cluster that mediates the biosynthesis of myceliothermophins, mycotoxins that contain a trans-fused decalin ring system connected to a conjugated 3-pyrrolin-2-one moiety and that have potential anti-tumor properties. The polyketide synthase module (PKS) of the PKS-NRPS mycA is responsible for the synthesis of the octaketide backbone. The downstream nonribosomal peptide synthetase (NRPS) module then amidates the carboxyl end of the octaketide with a leucine. A reductase-like domain (R) at the C-terminus catalyzes the reductive release of the polyketide-amino acid intermediate. Because mycA lacks a designated enoylreductase (ER) domain, the required activity is provided the enoyl reductase mycC. Following mycA-catalyzed construction and release of aminoacyl polyketide aldehyde, Knoevenagel condensation yields the expected ketone. This C18 keto acyclic precursor is the substrate of the Diels-Alderase mycB, that catalyzes the Diels-Alder cycloaddition to produce myceliothermophin E. A yet unknown oxygenase involved in the production of myceliothermophin A, via substitution with a hydroxyl group at the C21, has still to be identified. The sequence is that of Hybrid PKS-NRPS synthetase mycA from Thermothelomyces thermophilus (strain ATCC 42464 / BCRC 31852 / DSM 1799) (Sporotrichum thermophile).